Here is a 120-residue protein sequence, read N- to C-terminus: NAD(P)H-quinone oxidoreductase subunit 3, chloroplastic (120 aa).

A run of 3 helical transmembrane segments spans residues 9–29 (IFWA…FISG), 64–84 (MFAL…PWAM), and 88–108 (VLGV…IVGL).

Belongs to the complex I subunit 3 family. In terms of assembly, NDH is composed of at least 16 different subunits, 5 of which are encoded in the nucleus.

The protein resides in the plastid. The protein localises to the chloroplast thylakoid membrane. It carries out the reaction a plastoquinone + NADH + (n+1) H(+)(in) = a plastoquinol + NAD(+) + n H(+)(out). It catalyses the reaction a plastoquinone + NADPH + (n+1) H(+)(in) = a plastoquinol + NADP(+) + n H(+)(out). Functionally, NDH shuttles electrons from NAD(P)H:plastoquinone, via FMN and iron-sulfur (Fe-S) centers, to quinones in the photosynthetic chain and possibly in a chloroplast respiratory chain. The immediate electron acceptor for the enzyme in this species is believed to be plastoquinone. Couples the redox reaction to proton translocation, and thus conserves the redox energy in a proton gradient. This chain is NAD(P)H-quinone oxidoreductase subunit 3, chloroplastic, found in Panax ginseng (Korean ginseng).